The chain runs to 115 residues: Large ribosomal subunit protein bL19 (115 aa).

It belongs to the bacterial ribosomal protein bL19 family.

In terms of biological role, this protein is located at the 30S-50S ribosomal subunit interface and may play a role in the structure and function of the aminoacyl-tRNA binding site. This chain is Large ribosomal subunit protein bL19, found in Syntrophotalea carbinolica (strain DSM 2380 / NBRC 103641 / GraBd1) (Pelobacter carbinolicus).